Consider the following 276-residue polypeptide: Diaminopimelate epimerase (276 aa).

Residues Asn-13, Gln-46, and Asn-66 each contribute to the substrate site. The active-site Proton donor is Cys-75. Residues 76 to 77 (GN), Asn-159, Asn-192, and 210 to 211 (ER) contribute to the substrate site. The Proton acceptor role is filled by Cys-219. Position 220–221 (220–221 (GS)) interacts with substrate.

The protein belongs to the diaminopimelate epimerase family. Homodimer.

The protein resides in the cytoplasm. The enzyme catalyses (2S,6S)-2,6-diaminopimelate = meso-2,6-diaminopimelate. It participates in amino-acid biosynthesis; L-lysine biosynthesis via DAP pathway; DL-2,6-diaminopimelate from LL-2,6-diaminopimelate: step 1/1. Functionally, catalyzes the stereoinversion of LL-2,6-diaminopimelate (L,L-DAP) to meso-diaminopimelate (meso-DAP), a precursor of L-lysine and an essential component of the bacterial peptidoglycan. This chain is Diaminopimelate epimerase, found in Colwellia psychrerythraea (strain 34H / ATCC BAA-681) (Vibrio psychroerythus).